We begin with the raw amino-acid sequence, 238 residues long: Ribosomal RNA small subunit methyltransferase G (238 aa).

S-adenosyl-L-methionine contacts are provided by residues Gly106, Leu111, 157–158 (IE), and Arg170.

This sequence belongs to the methyltransferase superfamily. RNA methyltransferase RsmG family.

The protein localises to the cytoplasm. The enzyme catalyses guanosine(527) in 16S rRNA + S-adenosyl-L-methionine = N(7)-methylguanosine(527) in 16S rRNA + S-adenosyl-L-homocysteine. In terms of biological role, specifically methylates the N7 position of guanine in position 527 of 16S rRNA. The polypeptide is Ribosomal RNA small subunit methyltransferase G (Psychrobacter cryohalolentis (strain ATCC BAA-1226 / DSM 17306 / VKM B-2378 / K5)).